The sequence spans 1006 residues: Cytosolic carboxypeptidase 3 (1006 aa).

One can recognise a Peptidase M14 domain in the interval 304 to 576 (YPYTYSNLQE…HFCDSLLDYC (273 aa)). Zn(2+) is bound by residues His-368, Glu-371, and His-464. Glu-540 acts as the Proton donor/acceptor in catalysis. The interval 790 to 810 (ESHHQLKSKAKRCSSFQSKRT) is disordered.

It belongs to the peptidase M14 family. It depends on Zn(2+) as a cofactor. Widely expressed. Expressed abundantly in tissues with m otile cilia such as testis, lung and trachea. Abundantly expressed in pituitary and kidney, moderately expressed in brain, eye, fat, pancreas, stomach, and adrenal.

It localises to the cytoplasm. The protein resides in the cytosol. It carries out the reaction (L-glutamyl)(n+1)-gamma-L-glutamyl-L-glutamyl-[protein] + H2O = (L-glutamyl)(n)-gamma-L-glutamyl-L-glutamyl-[protein] + L-glutamate. Its function is as follows. Metallocarboxypeptidase that mediates deglutamylation of tubulin and non-tubulin target proteins. Catalyzes the removal of polyglutamate side chains present on the gamma-carboxyl group of glutamate residues within the C-terminal tail of tubulin protein. Specifically cleaves tubulin long-side-chains, while it is not able to remove the branching point glutamate. Also catalyzes the removal of polyglutamate residues from the carboxy-terminus of non-tubulin proteins such as MYLK. May catalyze the hydrolysis of aspartate from the carboxy-terminus of target proteins. Does not show detyrosinase or deglycylase activities from the carboxy-terminus of target proteins. This chain is Cytosolic carboxypeptidase 3, found in Mus musculus (Mouse).